A 228-amino-acid chain; its full sequence is Response regulator SaeR (228 aa).

The Response regulatory domain maps to 3-116 (HLLIVDDEQD…ELVLRINNLL (114 aa)). D51 carries the 4-aspartylphosphate modification. A DNA-binding region (ompR/PhoB-type) is located at residues 127–226 (VEQLSFDELT…VWGLGYKFER (100 aa)).

In terms of processing, phosphorylated by SaeS.

It localises to the cytoplasm. In terms of biological role, member of the two-component regulatory system SaeR/SaeS involved in the regulation of staphylococcal virulence factors in a strain-dependent fashion. Probably functions as a transcriptional regulator via a specific DNA-binding domain, recognizing motifs near the promoter sequences of target genes. In Staphylococcus aureus (strain USA300), this protein is Response regulator SaeR (saeR).